The chain runs to 479 residues: Ribosomal RNA small subunit methyltransferase F (479 aa).

S-adenosyl-L-methionine is bound by residues 125–131 (AAAPGSK), glutamate 149, aspartate 176, and aspartate 194. The active-site Nucleophile is cysteine 247.

The protein belongs to the class I-like SAM-binding methyltransferase superfamily. RsmB/NOP family.

Its subcellular location is the cytoplasm. The catalysed reaction is cytidine(1407) in 16S rRNA + S-adenosyl-L-methionine = 5-methylcytidine(1407) in 16S rRNA + S-adenosyl-L-homocysteine + H(+). Its function is as follows. Specifically methylates the cytosine at position 1407 (m5C1407) of 16S rRNA. This Escherichia coli O81 (strain ED1a) protein is Ribosomal RNA small subunit methyltransferase F.